A 1456-amino-acid polypeptide reads, in one-letter code: Ig-like and fibronectin type-III domain-containing protein C27B7.7 (1456 aa).

An N-terminal signal peptide occupies residues 1-16; it reads MISLSLVLLLLFGVRC. 2 consecutive Fibronectin type-III domains span residues 24-128 and 132-227; these read NDDS…SINT and IPKA…TNST. N-linked (GlcNAc...) asparagine glycans are attached at residues Asn-64, Asn-146, Asn-164, Asn-198, and Asn-225. The 87-residue stretch at 236–322 folds into the Ig-like 1 domain; sequence PDEEYTADPQ…DAGDSSKEVN (87 aa). Cysteines 254 and 308 form a disulfide. In terms of domain architecture, Fibronectin type-III 3 spans 328–426; it reads PGSPPSEITL…VAMERDTQPI (99 aa). Asn-471, Asn-497, and Asn-517 each carry an N-linked (GlcNAc...) asparagine glycan. Fibronectin type-III domains follow at residues 531 to 631, 636 to 736, and 737 to 846; these read APTQ…TLNG, PPDN…TAYS, and EVPI…WFRT. Asn-658, Asn-691, and Asn-692 each carry an N-linked (GlcNAc...) asparagine glycan. The region spanning 841–948 is the Ig-like 2 domain; sequence PRWFRTGHGK…GSSSASVEIR (108 aa). Cys-877 and Cys-932 form a disulfide bridge. Asn-893, Asn-898, Asn-969, Asn-1091, Asn-1120, Asn-1133, Asn-1151, Asn-1207, Asn-1268, Asn-1277, Asn-1298, Asn-1350, Asn-1357, and Asn-1382 each carry an N-linked (GlcNAc...) asparagine glycan. The Fibronectin type-III 7 domain occupies 955–1050; that stretch reads PPENIILTAY…SCISDVLYET (96 aa). Fibronectin type-III domains are found at residues 1148-1234, 1236-1343, and 1347-1438; these read APTN…TPNG, PKTA…ISFD, and VIDN…SSPS. The disordered stretch occupies residues 1419-1456; sequence LGRESPPSEEIDLEFISSPSPTPIISGSRRKVIKEPPL. The segment covering 1434–1445 has biased composition (low complexity); the sequence is ISSPSPTPIISG.

It is found in the secreted. This is Ig-like and fibronectin type-III domain-containing protein C27B7.7 from Caenorhabditis elegans.